We begin with the raw amino-acid sequence, 251 residues long: Triosephosphate isomerase (251 aa).

Residue 12–14 (NWK) participates in substrate binding. Residue histidine 99 is the Electrophile of the active site. The active-site Proton acceptor is glutamate 169. Residues glycine 175, serine 214, and 235–236 (GG) each bind substrate.

This sequence belongs to the triosephosphate isomerase family. As to quaternary structure, homodimer.

It localises to the cytoplasm. The enzyme catalyses D-glyceraldehyde 3-phosphate = dihydroxyacetone phosphate. It participates in carbohydrate biosynthesis; gluconeogenesis. Its pathway is carbohydrate degradation; glycolysis; D-glyceraldehyde 3-phosphate from glycerone phosphate: step 1/1. In terms of biological role, involved in the gluconeogenesis. Catalyzes stereospecifically the conversion of dihydroxyacetone phosphate (DHAP) to D-glyceraldehyde-3-phosphate (G3P). This is Triosephosphate isomerase from Bradyrhizobium sp. (strain BTAi1 / ATCC BAA-1182).